Consider the following 574-residue polypeptide: Frizzled-7 (574 aa).

Residues M1–A32 form the signal peptide. Topologically, residues Q33 to W256 are extracellular. Residues P44 to Q163 enclose the FZ domain. Cystine bridges form between C49–C110, C57–C103, C94–C131, C120–C160, and C124–C148. A glycan (N-linked (GlcNAc...) asparagine) is linked at N63. N-linked (GlcNAc...) asparagine glycosylation is present at N164. The chain crosses the membrane as a helical span at residues V257–V277. Residues D278 to P288 are Cytoplasmic-facing. The helical transmembrane segment at I289–L309 threads the bilayer. Residues E310–C336 are Extracellular-facing. Residues T337–L357 traverse the membrane as a helical segment. The Cytoplasmic portion of the chain corresponds to S358 to Q379. Residues Y380–G400 traverse the membrane as a helical segment. The Extracellular segment spans residues Q401–G423. Residues F424 to F444 form a helical membrane-spanning segment. Residues V445–R470 lie on the Cytoplasmic side of the membrane. Residues I471–Y491 traverse the membrane as a helical segment. The Extracellular segment spans residues E492–T528. A helical transmembrane segment spans residues V529–W549. Residues S550–V574 are Cytoplasmic-facing. The short motif at K552 to W557 is the Lys-Thr-X-X-X-Trp motif, mediates interaction with the PDZ domain of Dvl family members element. The PDZ-binding signature appears at T572–V574.

The protein belongs to the G-protein coupled receptor Fz/Smo family. In terms of assembly, interacts with MAGI3. Interacts with DVL1. Interacts with CCDC88C/DAPLE; the interaction displaces DVL1 from FZD7, leading to inhibition of canonical Wnt signaling and triggering of non-canonical Wnt responses. Interacts with MYOC. Binds to SDCBP; this interaction is increased by inositol trisphosphate (IP3). Interacts with glypican GPC3. (Microbial infection) Interacts with C.difficile toxin TcdB; frizzled receptors constitute the major host receptors for TcdB in the colonic epithelium. Ubiquitinated by ZNRF3, leading to its degradation by the proteasome. High expression in adult skeletal muscle and fetal kidney, followed by fetal lung, adult heart, brain, and placenta. Specifically expressed in squamous cell esophageal carcinomas.

It is found in the cell membrane. The protein localises to the endosome membrane. Functionally, receptor for Wnt proteins. Most frizzled receptors are coupled to the beta-catenin canonical signaling pathway, which leads to the activation of disheveled proteins, inhibition of GSK-3 kinase, nuclear accumulation of beta-catenin and activation of Wnt target genes. A second signaling pathway involving PKC and calcium fluxes has been seen for some family members, but it is not yet clear if it represents a distinct pathway or if it can be integrated in the canonical pathway, as PKC seems to be required for Wnt-mediated inactivation of GSK-3 kinase. Both pathways seem to involve interactions with G-proteins. Activation by WNT8 induces expression of beta-catenin target genes. Following ligand activation, binds to CCDC88C/DAPLE which displaces DVL1 from FZD7 and leads to inhibition of canonical Wnt signaling, activation of G-proteins by CCDC88C and triggering of non-canonical Wnt responses. May be involved in transduction and intercellular transmission of polarity information during tissue morphogenesis and/or in differentiated tissues. In terms of biological role, (Microbial infection) Acts as a receptor for C.difficile toxin TcdB in the colonic epithelium. In Homo sapiens (Human), this protein is Frizzled-7 (FZD7).